A 280-amino-acid chain; its full sequence is Diaminopimelate epimerase (280 aa).

Substrate is bound by residues N13 and N67. C76 functions as the Proton donor in the catalytic mechanism. Residues 77–78 (GN), N191, and 208–209 (ER) contribute to the substrate site. C218 functions as the Proton acceptor in the catalytic mechanism. 219–220 (GT) contributes to the substrate binding site.

The protein belongs to the diaminopimelate epimerase family. As to quaternary structure, homodimer.

It localises to the cytoplasm. The catalysed reaction is (2S,6S)-2,6-diaminopimelate = meso-2,6-diaminopimelate. It participates in amino-acid biosynthesis; L-lysine biosynthesis via DAP pathway; DL-2,6-diaminopimelate from LL-2,6-diaminopimelate: step 1/1. Catalyzes the stereoinversion of LL-2,6-diaminopimelate (L,L-DAP) to meso-diaminopimelate (meso-DAP), a precursor of L-lysine. The chain is Diaminopimelate epimerase from Archaeoglobus fulgidus (strain ATCC 49558 / DSM 4304 / JCM 9628 / NBRC 100126 / VC-16).